A 501-amino-acid polypeptide reads, in one-letter code: Putative antiporter subunit mnhD2 (501 aa).

The next 14 membrane-spanning stretches (helical) occupy residues Ser-4–Ile-24, Ile-33–Val-53, Leu-79–Phe-99, Tyr-109–Ala-129, Leu-131–Leu-151, Ile-162–Leu-182, Ile-207–Phe-227, Phe-245–Phe-265, Pro-274–Tyr-294, Ile-309–Phe-329, Asp-334–Leu-354, Phe-369–Gly-389, Leu-409–Val-429, and Asn-452–Phe-472.

Belongs to the CPA3 antiporters (TC 2.A.63) subunit D family. May form a heterooligomeric complex that consists of seven subunits: mnhA2, mnhB2, mnhC2, mnhD2, mnhE2, mnhF2 and mnhG2.

The protein localises to the cell membrane. This Staphylococcus saprophyticus subsp. saprophyticus (strain ATCC 15305 / DSM 20229 / NCIMB 8711 / NCTC 7292 / S-41) protein is Putative antiporter subunit mnhD2 (mnhD2).